A 273-amino-acid polypeptide reads, in one-letter code: Ribosomal RNA small subunit methyltransferase A (273 aa).

S-adenosyl-L-methionine-binding residues include Asn19, Leu21, Gly46, Glu71, Asp94, and Asn117.

This sequence belongs to the class I-like SAM-binding methyltransferase superfamily. rRNA adenine N(6)-methyltransferase family. RsmA subfamily.

The protein localises to the cytoplasm. It carries out the reaction adenosine(1518)/adenosine(1519) in 16S rRNA + 4 S-adenosyl-L-methionine = N(6)-dimethyladenosine(1518)/N(6)-dimethyladenosine(1519) in 16S rRNA + 4 S-adenosyl-L-homocysteine + 4 H(+). In terms of biological role, specifically dimethylates two adjacent adenosines (A1518 and A1519) in the loop of a conserved hairpin near the 3'-end of 16S rRNA in the 30S particle. May play a critical role in biogenesis of 30S subunits. The chain is Ribosomal RNA small subunit methyltransferase A from Burkholderia ambifaria (strain MC40-6).